We begin with the raw amino-acid sequence, 116 residues long: Large ribosomal subunit protein bL19 (116 aa).

It belongs to the bacterial ribosomal protein bL19 family.

This protein is located at the 30S-50S ribosomal subunit interface and may play a role in the structure and function of the aminoacyl-tRNA binding site. The chain is Large ribosomal subunit protein bL19 from Flavobacterium johnsoniae (strain ATCC 17061 / DSM 2064 / JCM 8514 / BCRC 14874 / CCUG 350202 / NBRC 14942 / NCIMB 11054 / UW101) (Cytophaga johnsonae).